The chain runs to 362 residues: UDP-N-acetylglucosamine--N-acetylmuramyl-(pentapeptide) pyrophosphoryl-undecaprenol N-acetylglucosamine transferase (362 aa).

UDP-N-acetyl-alpha-D-glucosamine contacts are provided by residues 15-17, Asn-127, Arg-165, Ser-191, Ile-247, 266-271, and Gln-292; these read TGG and ALTVSE.

Belongs to the glycosyltransferase 28 family. MurG subfamily.

The protein resides in the cell inner membrane. The enzyme catalyses di-trans,octa-cis-undecaprenyl diphospho-N-acetyl-alpha-D-muramoyl-L-alanyl-D-glutamyl-meso-2,6-diaminopimeloyl-D-alanyl-D-alanine + UDP-N-acetyl-alpha-D-glucosamine = di-trans,octa-cis-undecaprenyl diphospho-[N-acetyl-alpha-D-glucosaminyl-(1-&gt;4)]-N-acetyl-alpha-D-muramoyl-L-alanyl-D-glutamyl-meso-2,6-diaminopimeloyl-D-alanyl-D-alanine + UDP + H(+). It functions in the pathway cell wall biogenesis; peptidoglycan biosynthesis. In terms of biological role, cell wall formation. Catalyzes the transfer of a GlcNAc subunit on undecaprenyl-pyrophosphoryl-MurNAc-pentapeptide (lipid intermediate I) to form undecaprenyl-pyrophosphoryl-MurNAc-(pentapeptide)GlcNAc (lipid intermediate II). The protein is UDP-N-acetylglucosamine--N-acetylmuramyl-(pentapeptide) pyrophosphoryl-undecaprenol N-acetylglucosamine transferase of Shewanella baltica (strain OS185).